The following is a 190-amino-acid chain: Pancreatic IgW, short secretory form (190 aa).

Residues 53–145 form the Ig-like C1-type domain; the sequence is PNITALVPSV…PPSNFRSMIS (93 aa). Asn54 carries N-linked (GlcNAc...) asparagine glycosylation. Cys74 and Cys131 are oxidised to a cystine. Asn179 is a glycosylation site (N-linked (GlcNAc...) asparagine).

Expressed in pancreas, spleen, epigonal organ and at low levels in several other tissues.

It is found in the secreted. The polypeptide is Pancreatic IgW, short secretory form (Ginglymostoma cirratum (Nurse shark)).